The following is a 60-amino-acid chain: uncharacterized protein (60 aa).

This is an uncharacterized protein from Emericella nidulans (strain FGSC A4 / ATCC 38163 / CBS 112.46 / NRRL 194 / M139) (Aspergillus nidulans).